A 447-amino-acid chain; its full sequence is tRNA modification GTPase MnmE (447 aa).

Arginine 22, glutamate 81, and lysine 121 together coordinate (6S)-5-formyl-5,6,7,8-tetrahydrofolate. The TrmE-type G domain maps to 217–373 (GIVLAITGET…LMSEIVSYAE (157 aa)). Asparagine 227 contacts K(+). Residues 227-232 (NTGKSS), 246-252 (SDIPGTT), and 271-274 (DTAG) contribute to the GTP site. Serine 231 contacts Mg(2+). K(+) contacts are provided by serine 246, isoleucine 248, and threonine 251. Threonine 252 lines the Mg(2+) pocket. Lysine 447 contributes to the (6S)-5-formyl-5,6,7,8-tetrahydrofolate binding site.

This sequence belongs to the TRAFAC class TrmE-Era-EngA-EngB-Septin-like GTPase superfamily. TrmE GTPase family. Homodimer. Heterotetramer of two MnmE and two MnmG subunits. Requires K(+) as cofactor.

The protein localises to the cytoplasm. Exhibits a very high intrinsic GTPase hydrolysis rate. Involved in the addition of a carboxymethylaminomethyl (cmnm) group at the wobble position (U34) of certain tRNAs, forming tRNA-cmnm(5)s(2)U34. This is tRNA modification GTPase MnmE from Orientia tsutsugamushi (strain Boryong) (Rickettsia tsutsugamushi).